The sequence spans 396 residues: Subtilisin-like protease 5 (396 aa).

The signal sequence occupies residues 1 to 20 (MTGFFTILSFSLAALSVTNA). Residues 21-116 (AQILSVPKGA…VEPDAIISQH (96 aa)) constitute a propeptide that is removed on maturation. Residues 37 to 113 (YIVVMKDDTS…VAFVEPDAII (77 aa)) enclose the Inhibitor I9 domain. Asn63 is a glycosylation site (N-linked (GlcNAc...) asparagine). The 272-residue stretch at 125–396 (PWGLSRLSNR…SRLLYNGSGR (272 aa)) folds into the Peptidase S8 domain. Catalysis depends on charge relay system residues Asp156 and His187. Asn230 and Asn248 each carry an N-linked (GlcNAc...) asparagine glycan. Ser342 (charge relay system) is an active-site residue. Over residues 376 to 389 (PTIRNPGPDTTSRL) the composition is skewed to polar residues. A disordered region spans residues 376–396 (PTIRNPGPDTTSRLLYNGSGR). Asn392 is a glycosylation site (N-linked (GlcNAc...) asparagine).

The protein belongs to the peptidase S8 family.

It localises to the secreted. Functionally, secreted subtilisin-like serine protease with keratinolytic activity that contributes to pathogenicity. This is Subtilisin-like protease 5 (SUB5) from Trichophyton verrucosum (Cattle ringworm fungus).